We begin with the raw amino-acid sequence, 181 residues long: ATP-dependent protease subunit HslV (181 aa).

Thr7 is a catalytic residue. Positions 162, 165, and 168 each coordinate Na(+).

Belongs to the peptidase T1B family. HslV subfamily. As to quaternary structure, a double ring-shaped homohexamer of HslV is capped on each side by a ring-shaped HslU homohexamer. The assembly of the HslU/HslV complex is dependent on binding of ATP.

Its subcellular location is the cytoplasm. It carries out the reaction ATP-dependent cleavage of peptide bonds with broad specificity.. Allosterically activated by HslU binding. Functionally, protease subunit of a proteasome-like degradation complex believed to be a general protein degrading machinery. The polypeptide is ATP-dependent protease subunit HslV (Coxiella burnetii (strain Dugway 5J108-111)).